Consider the following 354-residue polypeptide: Protein CbrA (354 aa).

Belongs to the CbrA family.

This is Protein CbrA (cbrA) from Escherichia coli (strain K12).